The following is a 494-amino-acid chain: Paired box protein Pax-2-B (494 aa).

The paired DNA-binding region spans 15–141; the sequence is RHGGVNQLGG…SSINRIIRTK (127 aa). The PAI subdomain stretch occupies residues 18–74; it reads GVNQLGGVFVNGRPLPDVVRQRIVELAHQGVRPCDISRQLRVSHGCVSKILGRYYET. Positions 93–141 are RED subdomain; it reads KVVDKIADYKRQNPTMFAWEIRDRLLAEGICDNDTVPSVSSINRIIRTK. The segment at 142–221 is disordered; sequence VQQPFHPTPD…GDSQSSVESL (80 aa). Positions 163–175 are enriched in low complexity; that stretch reads VPSTASPPVSSAS.

In terms of tissue distribution, expression becomes spatially localized at mid-gastrula stages and is localized to the nervous system (midbrain, hindbrain, spinal cord), sensory organs (optic vesicle and stalk, otic vesicle), visceral arches, developing excretory system (pronephros, pronephric duct, rectal diverticulum, proctodaeum) and thryoid gland. Splicing does not appear to be tissue-specific.

Its subcellular location is the nucleus. Its function is as follows. Probable transcription factor. Involved in kidney development, acting synergistically with lhx1/lim-1 in pronephric morphogenesis during the tailbud stages. The sequence is that of Paired box protein Pax-2-B (pax2-b) from Xenopus laevis (African clawed frog).